The primary structure comprises 217 residues: MOB kinase activator 3A (217 aa).

The Zn(2+) site is built by Cys-83, Cys-88, His-165, and His-170.

This sequence belongs to the MOB1/phocein family.

In terms of biological role, may regulate the activity of kinases. This is MOB kinase activator 3A (MOB3A) from Bos taurus (Bovine).